The primary structure comprises 427 residues: Type II methyltransferase M1.BsuMI (427 aa).

In terms of domain architecture, SAM-dependent MTase C5-type spans 84 to 427; it reads INIADLFSGC…SYLLALHQLR (344 aa). Residue cysteine 176 is part of the active site.

The protein belongs to the class I-like SAM-binding methyltransferase superfamily. C5-methyltransferase family. As to quaternary structure, monomer. May form a complex with YdiP, also seems to be active alone.

The catalysed reaction is a 2'-deoxycytidine in DNA + S-adenosyl-L-methionine = a 5-methyl-2'-deoxycytidine in DNA + S-adenosyl-L-homocysteine + H(+). Somewhat inhibited by MgCl(2) and spermidine, strongly inhibited by MnCl(2). In terms of biological role, a methylase, recognizes the double-stranded sequence 5'-YTCGAR-3', methylates C-3 on both strands, and protects the DNA from cleavage by the BsuMI endonuclease. This is Type II methyltransferase M1.BsuMI (ydiO) from Bacillus subtilis (strain 168).